Consider the following 705-residue polypeptide: Polyribonucleotide nucleotidyltransferase (705 aa).

Mg(2+) is bound by residues Asp485 and Asp491. Residues 552 to 611 (PRVYTMTIAPEKIRDVIGAGGKTINKIIGETGVQIDIKEDGKIYVMSSDSVGANRALKMI) enclose the KH domain. An S1 motif domain is found at 621-689 (GEIYLGKVTR…DQGRINLSRR (69 aa)).

The protein belongs to the polyribonucleotide nucleotidyltransferase family. The cofactor is Mg(2+).

It is found in the cytoplasm. It carries out the reaction RNA(n+1) + phosphate = RNA(n) + a ribonucleoside 5'-diphosphate. Functionally, involved in mRNA degradation. Catalyzes the phosphorolysis of single-stranded polyribonucleotides processively in the 3'- to 5'-direction. In Clostridium tetani (strain Massachusetts / E88), this protein is Polyribonucleotide nucleotidyltransferase.